The primary structure comprises 890 residues: Alanine--tRNA ligase (890 aa).

Zn(2+) contacts are provided by histidine 572, histidine 576, cysteine 674, and histidine 678.

Belongs to the class-II aminoacyl-tRNA synthetase family. Zn(2+) serves as cofactor.

The protein localises to the cytoplasm. It catalyses the reaction tRNA(Ala) + L-alanine + ATP = L-alanyl-tRNA(Ala) + AMP + diphosphate. Catalyzes the attachment of alanine to tRNA(Ala) in a two-step reaction: alanine is first activated by ATP to form Ala-AMP and then transferred to the acceptor end of tRNA(Ala). Also edits incorrectly charged Ser-tRNA(Ala) and Gly-tRNA(Ala) via its editing domain. The polypeptide is Alanine--tRNA ligase (Saccharopolyspora erythraea (strain ATCC 11635 / DSM 40517 / JCM 4748 / NBRC 13426 / NCIMB 8594 / NRRL 2338)).